The chain runs to 546 residues: Serine/threonine-protein kinase Chk2 (546 aa).

The tract at residues Met1–Ser70 is disordered. The segment covering His8–Ser70 has biased composition (low complexity). Thr68 is modified (phosphothreonine; by MAP3K20). Residue Ser71 is modified to Phosphoserine; by PLK3. Thr77 is modified (phosphothreonine; by ATM and MAP3K20). Phosphoserine; by PLK3 is present on Ser82. The FHA domain occupies Tyr117–Ile179. One can recognise a Protein kinase domain in the interval Tyr224 to Leu490. ATP contacts are provided by residues Gly231–Val238, Lys253, and Glu306–Glu312. Asp351 serves as the catalytic Proton acceptor. ATP contacts are provided by residues Glu355–Asn356 and Asp372. A T-loop/activation segment region spans residues Asp372–Glu398. Residue Ser383 is modified to Phosphoserine; by autocatalysis. Phosphothreonine; by autocatalysis occurs at positions 387 and 391. A Phosphoserine modification is found at Ser460.

It belongs to the protein kinase superfamily. CAMK Ser/Thr protein kinase family. CHK2 subfamily. In terms of assembly, homodimer. Homodimerization is part of the activation process but the dimer may dissociate following activation. Interacts with PML. Interacts with TP53. Interacts with RB1; phosphorylates RB1. Interacts with BRCA1. Interacts (phosphorylated at Thr-68) with MDC1; requires ATM-mediated phosphorylation of CHEK2. Interacts with TP53BP1; modulates CHEK2 phosphorylation at Thr-68 in response to ionizing radiation. Interacts with CDC25A; phosphorylates CDC25A and mediates its degradation in response to ionizing radiation. Interacts with CUL1; mediates CHEK2 ubiquitination and regulation. Interacts with CDKN2AIP. Interacts (via protein kinase domain) with CCAR2 (via N-terminus). Interacts with SIRT1. Requires Mg(2+) as cofactor. Post-translationally, phosphorylated. Phosphorylated at Ser-82 by PLK3 in response to DNA damage, promoting phosphorylation at Thr-77 by ATM and the G2/M transition checkpoint. Phosphorylation at Thr-77 induces homodimerization. Autophosphorylates at Thr-387 and Thr-391 in the T-loop/activation segment upon dimerization to become fully active. DNA damage-induced autophosphorylation at Ser-383 induces CUL1-mediated ubiquitination and regulates the pro-apoptotic function. Phosphorylation at Ser-460 also regulates ubiquitination. Phosphorylated by PLK4. In terms of processing, ubiquitinated. CUL1-mediated ubiquitination regulates the pro-apoptotic function. Ubiquitination may also regulate protein stability. Ubiquitinated by RNF8 via 'Lys-48'-linked ubiquitination. Ubiquitously expressed with higher levels in the thymus, spleen and colon (at protein level).

The protein localises to the nucleus. The protein resides in the PML body. It localises to the nucleoplasm. The catalysed reaction is L-seryl-[protein] + ATP = O-phospho-L-seryl-[protein] + ADP + H(+). The enzyme catalyses L-threonyl-[protein] + ATP = O-phospho-L-threonyl-[protein] + ADP + H(+). With respect to regulation, activated through phosphorylation at Thr-68 by ATM in response to DNA double-strand breaks. Activation is modulated by several mediators including MDC1 and TP53BP1. Induces homodimerization with exchange of the T-loop/activation segment between protomers and transphosphorylation of the protomers. The autophosphorylated kinase dimer is fully active. Negatively regulated by PPM1D through dephosphorylation of Thr-68. Serine/threonine-protein kinase which is required for checkpoint-mediated cell cycle arrest, activation of DNA repair and apoptosis in response to the presence of DNA double-strand breaks. May also negatively regulate cell cycle progression during unperturbed cell cycles. Following activation, phosphorylates numerous effectors preferentially at the consensus sequence [L-X-R-X-X-S/T]. Regulates cell cycle checkpoint arrest through phosphorylation of CDC25A, CDC25B and CDC25C, inhibiting their activity. Inhibition of CDC25 phosphatase activity leads to increased inhibitory tyrosine phosphorylation of CDK-cyclin complexes and blocks cell cycle progression. May also phosphorylate NEK6 which is involved in G2/M cell cycle arrest. Regulates DNA repair through phosphorylation of BRCA2, enhancing the association of RAD51 with chromatin which promotes DNA repair by homologous recombination. Also stimulates the transcription of genes involved in DNA repair (including BRCA2) through the phosphorylation and activation of the transcription factor FOXM1. Regulates apoptosis through the phosphorylation of p53/TP53, MDM4 and PML. Phosphorylation of p53/TP53 at 'Ser-20' by CHEK2 may alleviate inhibition by MDM2, leading to accumulation of active p53/TP53. Phosphorylation of MDM4 may also reduce degradation of p53/TP53. Also controls the transcription of pro-apoptotic genes through phosphorylation of the transcription factor E2F1. Tumor suppressor, it may also have a DNA damage-independent function in mitotic spindle assembly by phosphorylating BRCA1. Its absence may be a cause of the chromosomal instability observed in some cancer cells. Promotes the CCAR2-SIRT1 association and is required for CCAR2-mediated SIRT1 inhibition. Under oxidative stress, promotes ATG7 ubiquitination by phosphorylating the E3 ubiquitin ligase TRIM32 at 'Ser-56' leading to positive regulation of the autophagosme assembly. The polypeptide is Serine/threonine-protein kinase Chk2 (Mus musculus (Mouse)).